A 406-amino-acid polypeptide reads, in one-letter code: Lymphocyte transmembrane adapter 1 (406 aa).

The disordered stretch occupies residues 1–25; the sequence is MYTTPAPPEITRRSSEPSTQQGTLG. The Extracellular portion of the chain corresponds to 1 to 33; it reads MYTTPAPPEITRRSSEPSTQQGTLGSLEGEKGH. Residues 34–54 traverse the membrane as a helical; Signal-anchor for type III membrane protein segment; the sequence is LLFPGFVVLVTIFLVVIVTCI. Over 55-406 the chain is Cytoplasmic; that stretch reads LWSRKKQKKR…LATETSGEEV (352 aa). The segment at 109-131 is disordered; it reads ESLLSRASDSPEPEVPQASGSLQ. Tyrosine 184 bears the Phosphotyrosine mark. The interval 219 to 258 is disordered; sequence AEGGHAGCGKATDRTGVWAPGLQGSNSLSEGDDSSQSSND. A compositionally biased stretch (low complexity) spans 242-258; that stretch reads GSNSLSEGDDSSQSSND. Phosphotyrosine is present on residues tyrosine 259, tyrosine 285, and tyrosine 352. Residues 358–406 are disordered; that stretch reads PELEGKDWKQGPGTWHPSDERTPSDQAGKFCEAVYPAGSLATETSGEEV.

As to quaternary structure, when phosphorylated, interacts with GRB2, PIK3R1 and GRAP2. Post-translationally, phosphorylated on tyrosines upon TCR or BCR activation; which leads to the recruitment of GRB2, PIK3R1 and GRAP2.

The protein resides in the cell membrane. Functionally, negatively regulates TCR (T-cell antigen receptor)-mediated signaling in T-cells and BCR (B-cell antigen receptor)-mediated signaling in B-cells. The polypeptide is Lymphocyte transmembrane adapter 1 (Lax1) (Rattus norvegicus (Rat)).